Reading from the N-terminus, the 200-residue chain is Superoxide dismutase [Fe] (200 aa).

Histidine 28, histidine 80, aspartate 162, and histidine 166 together coordinate Fe cation.

This sequence belongs to the iron/manganese superoxide dismutase family. As to quaternary structure, homodimer. Fe cation serves as cofactor.

It carries out the reaction 2 superoxide + 2 H(+) = H2O2 + O2. Functionally, destroys superoxide anion radicals which are normally produced within the cells and which are toxic to biological systems. The sequence is that of Superoxide dismutase [Fe] (sodB) from Nostoc sp. (strain PCC 7120 / SAG 25.82 / UTEX 2576).